A 346-amino-acid chain; its full sequence is Phosphate acyltransferase (346 aa).

Belongs to the PlsX family. Homodimer. Probably interacts with PlsY.

The protein localises to the cytoplasm. The enzyme catalyses a fatty acyl-[ACP] + phosphate = an acyl phosphate + holo-[ACP]. It participates in lipid metabolism; phospholipid metabolism. Functionally, catalyzes the reversible formation of acyl-phosphate (acyl-PO(4)) from acyl-[acyl-carrier-protein] (acyl-ACP). This enzyme utilizes acyl-ACP as fatty acyl donor, but not acyl-CoA. This chain is Phosphate acyltransferase, found in Crocosphaera subtropica (strain ATCC 51142 / BH68) (Cyanothece sp. (strain ATCC 51142)).